A 138-amino-acid polypeptide reads, in one-letter code: Probable phospholipase A2 homolog 1 (138 aa).

Residues 1-21 form the signal peptide; it reads MPPRSPLLALVFLAAGVLSSA. Intrachain disulfides connect Cys29/Cys56, Cys33/Cys62, Cys38/Cys109, Cys49/Cys69, Cys68/Cys93, and Cys75/Cys86. Ca(2+)-binding residues include Tyr48, Gly50, and Trp53. The active site involves His72. Asp73 is a Ca(2+) binding site.

Belongs to the phospholipase A2 family. Ca(2+) is required as a cofactor.

The protein localises to the secreted. The enzyme catalyses a 1,2-diacyl-sn-glycero-3-phosphocholine + H2O = a 1-acyl-sn-glycero-3-phosphocholine + a fatty acid + H(+). In terms of biological role, PA2 catalyzes the calcium-dependent hydrolysis of the 2-acyl groups in 3-sn-phosphoglycerides. Releases lysophospholipids (LPLs) and free fatty acids (FFAs) from membrane phospholipids in response to hormones and other external stimuli. The protein is Probable phospholipase A2 homolog 1 (PLA2-I) of Oryza sativa subsp. japonica (Rice).